A 341-amino-acid chain; its full sequence is Solute carrier family 25 member 43 (341 aa).

3 Solcar repeats span residues 11–101 (TGGQ…TDDL), 105–185 (SQWS…LLVY), and 200–298 (SLPQ…LYQN). 6 consecutive transmembrane segments (helical) span residues 16–36 (LLCA…LELA), 68–88 (LWKG…VQLA), 110–130 (IMAG…TDLI), 166–186 (GVSL…LVYM), 205–225 (FANV…FETV), and 262–282 (VLGL…YFGI).

It belongs to the mitochondrial carrier (TC 2.A.29) family.

The protein localises to the mitochondrion inner membrane. This Homo sapiens (Human) protein is Solute carrier family 25 member 43 (SLC25A43).